The chain runs to 561 residues: uncharacterized protein (561 aa).

Disordered stretches follow at residues 20–42 (IQEQATSDTKPESSPDINLGCSP) and 82–283 (QIGS…STPF). Residues 103–131 (DKISEDTDQERVVVCESLENKSSSKDKSP) are compositionally biased toward basic and acidic residues. Basic residues-rich tracts occupy residues 135-156 (RSPKRHKSSKKHKSSKKHKSSK) and 165-185 (KSSKRHKSHKKKDKSHKKRYR). Basic and acidic residues-rich tracts occupy residues 192–203 (SLSRDRSSSRDR), 211–247 (YSRDRSLSRDRSLSRDRSLSRDRSPPRDRSLSRDRSP), and 259–272 (PLRDRSPTRDRSVS).

Belongs to the mimivirus L41 family.

This is an uncharacterized protein from Acanthamoeba polyphaga (Amoeba).